The following is a 94-amino-acid chain: Pyrimidine/purine nucleoside phosphorylase (94 aa).

Belongs to the nucleoside phosphorylase PpnP family.

It carries out the reaction a purine D-ribonucleoside + phosphate = a purine nucleobase + alpha-D-ribose 1-phosphate. The catalysed reaction is adenosine + phosphate = alpha-D-ribose 1-phosphate + adenine. The enzyme catalyses cytidine + phosphate = cytosine + alpha-D-ribose 1-phosphate. It catalyses the reaction guanosine + phosphate = alpha-D-ribose 1-phosphate + guanine. It carries out the reaction inosine + phosphate = alpha-D-ribose 1-phosphate + hypoxanthine. The catalysed reaction is thymidine + phosphate = 2-deoxy-alpha-D-ribose 1-phosphate + thymine. The enzyme catalyses uridine + phosphate = alpha-D-ribose 1-phosphate + uracil. It catalyses the reaction xanthosine + phosphate = alpha-D-ribose 1-phosphate + xanthine. Functionally, catalyzes the phosphorolysis of diverse nucleosides, yielding D-ribose 1-phosphate and the respective free bases. Can use uridine, adenosine, guanosine, cytidine, thymidine, inosine and xanthosine as substrates. Also catalyzes the reverse reactions. This is Pyrimidine/purine nucleoside phosphorylase from Pseudomonas putida (strain W619).